A 231-amino-acid chain; its full sequence is 26S proteasome non-ATPase regulatory subunit 10 (231 aa).

7 ANK repeats span residues 3-36 (GCVS…ATRT), 37-69 (DQDS…VNDK), 70-102 (DDAG…VNAV), 103-135 (NQNG…PDAK), 136-168 (DHYD…TNIQ), 169-201 (DTEG…IYIE), and 202-226 (NKEE…LAES).

Part of transient complex containing PSMD10, PSMC4, PSMC5 and PAAF1 formed during the assembly of the 26S proteasome. Stays associated throughout the assembly of the PA700/19S RC and is released upon association with the 20S core. Interacts with PSMC4. Interacts with RB1. Interacts with CDK4. Interacts with MDM2. Interacts with RELA. Associates with a CDK4:CCND2 serine/threonine kinase complex. Interacts with ARHGDIA and increases the interaction between ARHGDIA and RHOA, hence promotes ARHGDIA inactivation of RHOA and ROCK.

It is found in the cytoplasm. Its subcellular location is the nucleus. In terms of biological role, acts as a chaperone during the assembly of the 26S proteasome, specifically of the PA700/19S regulatory complex (RC). In the initial step of the base subcomplex assembly is part of an intermediate PSMD10:PSMC4:PSMC5:PAAF1 module which probably assembles with a PSMD5:PSMC2:PSMC1:PSMD2 module. Independently of the proteasome, regulates EGF-induced AKT activation through inhibition of the RHOA/ROCK/PTEN pathway, leading to prolonged AKT activation. Plays an important role in RAS-induced tumorigenesis. Its function is as follows. Acts as an oncoprotein by being involved in negative regulation of tumor suppressors RB1 and p53/TP53. Overexpression is leading to phosphorylation of RB1 and proteasomal degradation of RB1. Regulates CDK4-mediated phosphorylation of RB1 by competing with CDKN2A for binding with CDK4. Facilitates binding of MDM2 to p53/TP53 and the mono- and polyubiquitination of p53/TP53 by MDM2 suggesting a function in targeting the TP53:MDM2 complex to the 26S proteasome. Involved in p53-independent apoptosis. Involved in regulation of NF-kappa-B by retaining it in the cytoplasm. Binds to the NF-kappa-B component RELA and accelerates its XPO1/CRM1-mediated nuclear export. The polypeptide is 26S proteasome non-ATPase regulatory subunit 10 (Psmd10) (Mus musculus (Mouse)).